Reading from the N-terminus, the 302-residue chain is MPEAMTASPEKTPASDYERRQKLELNKLQKRLRREVGQAIADFSMIEAGDKVMCCLSGGKDSYAMLDILLNLQKSAPVRFELIAVNLDQKQPGFPEHVLPDYLESMGIEYHIIEKDTYSIVKEKVPEGKTTCGLCSRLRRGILYNFAEEHGVTKIALGHHRDDLLETLFLNMFYGGKLKSMPPVLHSDDGRNTVIRPLAYAREKDIARYASLREFPIIPCNLCGSQENLQRQVIKEMFQTWDKQHPGRLETMFRALCNVEPSHLADPELYDFREGRRLGGKRQAVQTAEPQQDFGRLDVLNL.

The PP-loop motif motif lies at 57 to 62 (SGGKDS). Positions 132, 135, and 223 each coordinate [4Fe-4S] cluster.

It belongs to the TtcA family. Homodimer. Mg(2+) serves as cofactor. [4Fe-4S] cluster is required as a cofactor.

It is found in the cytoplasm. The catalysed reaction is cytidine(32) in tRNA + S-sulfanyl-L-cysteinyl-[cysteine desulfurase] + AH2 + ATP = 2-thiocytidine(32) in tRNA + L-cysteinyl-[cysteine desulfurase] + A + AMP + diphosphate + H(+). It participates in tRNA modification. Functionally, catalyzes the ATP-dependent 2-thiolation of cytidine in position 32 of tRNA, to form 2-thiocytidine (s(2)C32). The sulfur atoms are provided by the cysteine/cysteine desulfurase (IscS) system. The chain is tRNA-cytidine(32) 2-sulfurtransferase from Marinobacter nauticus (strain ATCC 700491 / DSM 11845 / VT8) (Marinobacter aquaeolei).